The sequence spans 248 residues: ATP synthase subunit a, chloroplastic (248 aa).

Transmembrane regions (helical) follow at residues 35–55 (GQVF…SFLG), 94–114 (VPYI…GALI), 133–153 (INTT…AGLS), 202–222 (VFTL…GLFA), and 224–244 (SIQA…AMEG).

The protein belongs to the ATPase A chain family. As to quaternary structure, F-type ATPases have 2 components, CF(1) - the catalytic core - and CF(0) - the membrane proton channel. CF(1) has five subunits: alpha(3), beta(3), gamma(1), delta(1), epsilon(1). CF(0) has four main subunits: a, b, b' and c.

It localises to the plastid. Its subcellular location is the chloroplast thylakoid membrane. Its function is as follows. Key component of the proton channel; it plays a direct role in the translocation of protons across the membrane. This Porphyra purpurea (Red seaweed) protein is ATP synthase subunit a, chloroplastic.